Here is a 67-residue protein sequence, read N- to C-terminus: uncharacterized protein (67 aa).

This is an uncharacterized protein from Saccharolobus islandicus (Sulfolobus islandicus).